Consider the following 207-residue polypeptide: Cytochrome c biogenesis ATP-binding export protein CcmA (207 aa).

In terms of domain architecture, ABC transporter spans 4–207; that stretch reads LEVRELLCER…RISLTQTRAV (204 aa). Position 36-43 (36-43) interacts with ATP; that stretch reads GSNGAGKT.

Belongs to the ABC transporter superfamily. CcmA exporter (TC 3.A.1.107) family. In terms of assembly, the complex is composed of two ATP-binding proteins (CcmA) and two transmembrane proteins (CcmB).

The protein resides in the cell inner membrane. It catalyses the reaction heme b(in) + ATP + H2O = heme b(out) + ADP + phosphate + H(+). In terms of biological role, part of the ABC transporter complex CcmAB involved in the biogenesis of c-type cytochromes; once thought to export heme, this seems not to be the case, but its exact role is uncertain. Responsible for energy coupling to the transport system. The protein is Cytochrome c biogenesis ATP-binding export protein CcmA of Escherichia coli O157:H7.